The following is a 361-amino-acid chain: D-alanine--D-alanine ligase (361 aa).

The ATP-grasp domain maps to K144 to Q350. Position 177–232 (P177–E232) interacts with ATP. Mg(2+) is bound by residues D303, E317, and N319.

The protein belongs to the D-alanine--D-alanine ligase family. The cofactor is Mg(2+). Requires Mn(2+) as cofactor.

The protein localises to the cytoplasm. The enzyme catalyses 2 D-alanine + ATP = D-alanyl-D-alanine + ADP + phosphate + H(+). It participates in cell wall biogenesis; peptidoglycan biosynthesis. Functionally, cell wall formation. This is D-alanine--D-alanine ligase from Chlorobium phaeovibrioides (strain DSM 265 / 1930) (Prosthecochloris vibrioformis (strain DSM 265)).